Reading from the N-terminus, the 289-residue chain is 4-hydroxy-tetrahydrodipicolinate synthase (289 aa).

Thr43 contacts pyruvate. The active-site Proton donor/acceptor is the Tyr131. Catalysis depends on Lys160, which acts as the Schiff-base intermediate with substrate. Position 200 (Val200) interacts with pyruvate.

It belongs to the DapA family. Homotetramer; dimer of dimers.

It localises to the cytoplasm. The catalysed reaction is L-aspartate 4-semialdehyde + pyruvate = (2S,4S)-4-hydroxy-2,3,4,5-tetrahydrodipicolinate + H2O + H(+). It participates in amino-acid biosynthesis; L-lysine biosynthesis via DAP pathway; (S)-tetrahydrodipicolinate from L-aspartate: step 3/4. In terms of biological role, catalyzes the condensation of (S)-aspartate-beta-semialdehyde [(S)-ASA] and pyruvate to 4-hydroxy-tetrahydrodipicolinate (HTPA). The polypeptide is 4-hydroxy-tetrahydrodipicolinate synthase (Methanococcus maripaludis (strain C7 / ATCC BAA-1331)).